The chain runs to 120 residues: NADH dehydrogenase [ubiquinone] 1 subunit C2 (120 aa).

N-acetylmethionine is present on Met-1. Residues Gly-57 to Leu-76 traverse the membrane as a helical segment.

It belongs to the complex I NDUFC2 subunit family. In terms of assembly, complex I is composed of 45 different subunits. Interacts with TMEM242. In terms of processing, there is a minor unacetylated form of subunit B14.5b.

The protein localises to the mitochondrion inner membrane. Its function is as follows. Accessory subunit of the mitochondrial membrane respiratory chain NADH dehydrogenase (Complex I), that is believed not to be involved in catalysis but required for the complex assembly. Complex I functions in the transfer of electrons from NADH to the respiratory chain. The immediate electron acceptor for the enzyme is believed to be ubiquinone. The polypeptide is NADH dehydrogenase [ubiquinone] 1 subunit C2 (Bos taurus (Bovine)).